Here is a 497-residue protein sequence, read N- to C-terminus: 4,4'-diaponeurosporene oxygenase (497 aa).

V7–I19 serves as a coordination point for FAD.

Belongs to the carotenoid/retinoid oxidoreductase family. CrtP subfamily. Requires FAD as cofactor.

The catalysed reaction is all-trans-4,4'-diaponeurosporene + 2 AH2 + 2 O2 = 4,4'-diaponeurosporenal + 2 A + 3 H2O. It functions in the pathway carotenoid biosynthesis; staphyloxanthin biosynthesis; staphyloxanthin from farnesyl diphosphate: step 3/5. Its function is as follows. Involved in the biosynthesis of the yellow-orange carotenoid staphyloxanthin, which plays a role in the virulence via its protective function against oxidative stress. Catalyzes the oxidation of the terminal methyl side group of 4,4'-diaponeurosporene to form 4,4'-diaponeurosporen-4-al. The protein is 4,4'-diaponeurosporene oxygenase of Staphylococcus aureus (strain MW2).